A 430-amino-acid polypeptide reads, in one-letter code: Trigger factor (430 aa).

The PPIase FKBP-type domain maps to 157-242 (GDLVALETWS…AVEVSEPVLP (86 aa)).

The protein belongs to the FKBP-type PPIase family. Tig subfamily.

The protein resides in the cytoplasm. The catalysed reaction is [protein]-peptidylproline (omega=180) = [protein]-peptidylproline (omega=0). Functionally, involved in protein export. Acts as a chaperone by maintaining the newly synthesized protein in an open conformation. Functions as a peptidyl-prolyl cis-trans isomerase. This chain is Trigger factor, found in Xanthomonas oryzae pv. oryzae (strain PXO99A).